The primary structure comprises 311 residues: AT-hook motif nuclear-localized protein 27 (311 aa).

Residues 40 to 105 (HHHQHQQHQQ…KNKAKPPIIV (66 aa)) are disordered. The segment covering 55–75 (DDSRESDHSNKDHHQQGRPDS) has biased composition (basic and acidic residues). The a.T hook DNA-binding region spans 86–98 (KRPRGRPPGSKNK). The 149-residue stretch at 110–258 (PNALRSHVLE…EEGGGGGGGG (149 aa)) folds into the PPC domain. A required for the binding to non-AHL interactors region spans residues 178-183 (GRFEIL). A disordered region spans residues 246-311 (EEEEEGGGGG…GAGTPSRPPF (66 aa)). Residues 252 to 262 (GGGGGGGGGGP) show a composition bias toward gly residues. The span at 263–277 (PQMQQAPSASPPSGV) shows a compositional bias: low complexity. Gly residues predominate over residues 278 to 292 (TGQGQLGGNVGGYGF).

As to quaternary structure, homodimer. Interacts with AHL12, AHL25, AHL29, TCP4, TCP13, EF114, ATAF2/NAC081, histone H2B.1, histone H3.3 and histone H4. Expressed in the hypocotyl and the vascular tissue of seedling.

It localises to the nucleus. Transcription factor that specifically binds AT-rich DNA sequences related to the nuclear matrix attachment regions (MARs). Negatively regulates plant innate immunity (PTI) to pathogens through the down-regulation of the PAMP-triggered FRK1 expression. Acts redundantly with AHL18, AHL22 and AHL29 in the regulation of flowering and regulation of the hypocotyl elongation. Acts as a chromatin remodeling factor that negatively regulates the leaf senescence. Acts redundantly with AHL29/SOB3 to modulate hypocotyl growth inhibition in response to light. The polypeptide is AT-hook motif nuclear-localized protein 27 (Arabidopsis thaliana (Mouse-ear cress)).